The chain runs to 159 residues: Phosphopantetheine adenylyltransferase (159 aa).

Substrate is bound at residue T10. Residues 10–11 (TF) and H18 each bind ATP. Substrate is bound by residues K42, M74, and R88. ATP contacts are provided by residues 89 to 91 (GLR), E99, and 124 to 130 (WSFISSS).

Belongs to the bacterial CoaD family. Homohexamer. The cofactor is Mg(2+).

It localises to the cytoplasm. It carries out the reaction (R)-4'-phosphopantetheine + ATP + H(+) = 3'-dephospho-CoA + diphosphate. It participates in cofactor biosynthesis; coenzyme A biosynthesis; CoA from (R)-pantothenate: step 4/5. Its function is as follows. Reversibly transfers an adenylyl group from ATP to 4'-phosphopantetheine, yielding dephospho-CoA (dPCoA) and pyrophosphate. The polypeptide is Phosphopantetheine adenylyltransferase (Escherichia fergusonii (strain ATCC 35469 / DSM 13698 / CCUG 18766 / IAM 14443 / JCM 21226 / LMG 7866 / NBRC 102419 / NCTC 12128 / CDC 0568-73)).